A 111-amino-acid chain; its full sequence is Large ribosomal subunit protein eL30 (111 aa).

The protein belongs to the eukaryotic ribosomal protein eL30 family.

In Oryza sativa subsp. japonica (Rice), this protein is Large ribosomal subunit protein eL30 (RPL30).